A 1584-amino-acid polypeptide reads, in one-letter code: Cilia- and flagella-associated protein 74 (1584 aa).

Residues 300–379 adopt a coiled-coil conformation; that stretch reads RKFQAWDRAK…EAEEEKRKKQ (80 aa). A compositionally biased stretch (polar residues) spans 692–706; the sequence is SEQQLEGTESSQADM. The tract at residues 692–739 is disordered; sequence SEQQLEGTESSQADMQSRKELEKLDKEQEEEQPAEPERLTTVIPPSEE. Positions 707–717 are enriched in basic and acidic residues; it reads QSRKELEKLDK.

Belongs to the CFAP74 family.

It localises to the cytoplasm. The protein localises to the cytoskeleton. Its subcellular location is the cilium axoneme. It is found in the flagellum axoneme. In terms of biological role, as part of the central apparatus of the cilium axoneme may play a role in cilium movement. May play an important role in sperm architecture and function. This chain is Cilia- and flagella-associated protein 74, found in Homo sapiens (Human).